The sequence spans 324 residues: MSIYDDIFKQFPTIDEWSESNEKIMLEPYTHLGINTAKELPSMVTKAFNHWYQVPQPALDIILQIVGPIHAACLLIDDIQDDSDLRGGNPVAHKVYGVAQTINTATYVCFDAYHKISKLTPFSKSPETTDLWSIINDEIAALHRGQWIDLYWRDSLICPTEEEYLRMIHNKTGAIFRLPIKLLQALSPVDSPPDCFPLVNVVGILVQIRNDLLSLSPDFTKDKGFCEDFSEGKFSFPIIHSVKADSSNSLLIDILRLRPKDEPTKRKALRYMKDQTKSLDHTFDVLCKLEKTAKEELEKLGGNSELSSILELIQVSPIPEIADR.

Mg(2+) contacts are provided by Asp-77 and Asp-81.

The protein belongs to the FPP/GGPP synthase family. Mg(2+) is required as a cofactor.

It carries out the reaction (2E)-geranyl diphosphate = (E)-beta-ocimene + diphosphate. The enzyme catalyses (2E,6E)-farnesyl diphosphate = (3E,6E)-alpha-farnesene + diphosphate. The catalysed reaction is (2E,6E,10E)-geranylgeranyl diphosphate = (E,E,E)-alpha-springene + diphosphate. Its function is as follows. Terpene synthase that shows monoterpene synthase activity and produces (E)-beta-ocimene as a major product, using geranyl diphosphate (GPP) as substrate. Also shows sesquiterpene synthase activity as it is able to convert farnesyl diphosphate (FPP) into (E,E)-alpha-farnesene. Finally, TPS2 can convert geranylgeranyl diphosphate into (E,E,E)-alpha-springene. This is IDS-like terpene synthase 2 from Melampsora lini (Rust fungus).